A 137-amino-acid chain; its full sequence is Small heat shock protein IbpA (137 aa).

In terms of domain architecture, sHSP spans 28-137; that stretch reads SQSNGGYPPY…ANKPRRIEIN (110 aa).

Belongs to the small heat shock protein (HSP20) family. In terms of assembly, monomer. Forms homomultimers of about 100-150 subunits at optimal growth temperatures. Conformation changes to monomers at high temperatures or high ionic concentrations.

The protein resides in the cytoplasm. In terms of biological role, associates with aggregated proteins, together with IbpB, to stabilize and protect them from irreversible denaturation and extensive proteolysis during heat shock and oxidative stress. Aggregated proteins bound to the IbpAB complex are more efficiently refolded and reactivated by the ATP-dependent chaperone systems ClpB and DnaK/DnaJ/GrpE. Its activity is ATP-independent. This is Small heat shock protein IbpA from Klebsiella pneumoniae (strain 342).